Here is a 603-residue protein sequence, read N- to C-terminus: NADH-ubiquinone oxidoreductase chain 5 (603 aa).

A run of 15 helical transmembrane segments spans residues 4–24 (ISTL…TTLL), 35–55 (ITKT…LLFV), 84–104 (FFSL…MEFS), 121–141 (LLLF…LQLF), 177–197 (IGDM…NSWE), 213–233 (LLGL…HPWL), 241–261 (TPVS…FTLI), 273–293 (VQTS…ICAL), 301–320 (IIAL…IGIN), 325–347 (AFTH…GSII), 366–386 (MPIT…MPFL), 413–433 (LIAV…ALLG), 457–477 (LILG…PHTT), 480–500 (MTMP…GFTV), and 583–603 (LMKL…LIAL).

The protein belongs to the complex I subunit 5 family. Core subunit of respiratory chain NADH dehydrogenase (Complex I) which is composed of 45 different subunits.

It localises to the mitochondrion inner membrane. The enzyme catalyses a ubiquinone + NADH + 5 H(+)(in) = a ubiquinol + NAD(+) + 4 H(+)(out). Its function is as follows. Core subunit of the mitochondrial membrane respiratory chain NADH dehydrogenase (Complex I) which catalyzes electron transfer from NADH through the respiratory chain, using ubiquinone as an electron acceptor. Essential for the catalytic activity and assembly of complex I. The polypeptide is NADH-ubiquinone oxidoreductase chain 5 (MT-ND5) (Mammuthus primigenius (Siberian woolly mammoth)).